A 400-amino-acid chain; its full sequence is Double C2-like domain-containing protein alpha (400 aa).

Positions 1 to 89 are interaction with UNC13D and DYNLT1; the sequence is MRGRRGDRMT…DSYDSDDATA (89 aa). 2 consecutive C2 domains span residues 89–211 and 251–384; these read ALGT…HFNI and ERGR…ERWH. 9 residues coordinate Ca(2+): Asp120, Asp126, Asp181, Asp183, Asp282, Asp288, Asp342, Asp344, and Asp350. The tract at residues 215–400 is interaction with UNC13D; it reads RQVPLASPSS…PPAAGALSSA (186 aa).

In terms of assembly, interacts (via N-terminus) with UNC13A. Interacts with cytoplasmic dynein light chain DYNLT1. Interacts with UNC13D. It depends on Ca(2+) as a cofactor. As to expression, predominantly expressed in brain. Also expressed in testis.

It localises to the lysosome. It is found in the cytoplasmic vesicle. The protein localises to the secretory vesicle. The protein resides in the synaptic vesicle membrane. Its subcellular location is the synapse. It localises to the synaptosome. Functionally, calcium sensor which most probably regulates fusion of vesicles with membranes. Binds calcium and phospholipids. May be involved in calcium dependent neurotransmitter release through the interaction with UNC13A. May be involved in calcium-dependent spontaneous release of neurotransmitter in absence of action potentials in neuronal cells. Regulates Ca(2+)-dependent secretory lysosome exocytosis in mast cells. This chain is Double C2-like domain-containing protein alpha (DOC2A), found in Homo sapiens (Human).